A 342-amino-acid polypeptide reads, in one-letter code: Aquaporin-8 (342 aa).

The next 3 helical transmembrane spans lie at 55-75 (FLAVFVLMVFIEGSAATAIFT), 98-118 (VAGGVSGAFLNPAVALAFAVL), and 126-146 (CIFYMISQYLAAFVASCTMFA). Positions 108–110 (NPA) match the NPA 1 motif. Residue N166 is glycosylated (N-linked (GlcNAc...) asparagine). 2 helical membrane passes run 184 to 204 (TAFADQVFCTAILLIVVLAMC) and 215 to 235 (FLPIAIGLLIITISCTLSYNA). Positions 240 to 242 (NPS) match the NPA 2 motif. The helical transmembrane segment at 266–286 (YTWFFVPVLGSHCGAIIGGAI) threads the bilayer. A compositionally biased stretch (polar residues) spans 302 to 327 (TNSVSSMSYNEDNSTLTKRKQVSNIV). Residues 302–342 (TNSVSSMSYNEDNSTLTKRKQVSNIVHDSKGAKGSSTAPVN) form a disordered region. An N-linked (GlcNAc...) asparagine glycan is attached at N314.

Belongs to the MIP/aquaporin (TC 1.A.8) family.

The protein resides in the cell membrane. Aquaglyceroporin that may modulate the water content and osmolytes during anhydrobiosis. The sequence is that of Aquaporin-8 from Milnesium tardigradum (Water bear).